The sequence spans 356 residues: Thiamine thiazole synthase, chloroplastic (356 aa).

Residues 1-51 (MAAMASTAFAPSVSSTTNKLFDSSFHGAPMSPSLLRLQPIKSSRPNNLSIS) constitute a chloroplast transit peptide. Substrate contacts are provided by residues A101, 121 to 122 (EQ), G129, and A194. C223 carries the 2,3-didehydroalanine (Cys) modification. Substrate contacts are provided by residues D225, H240, M292, and 302–304 (RMG).

This sequence belongs to the THI4 family. In terms of assembly, homooctamer. Fe cation is required as a cofactor. During the catalytic reaction, a sulfide is transferred from Cys-223 to a reaction intermediate, generating a dehydroalanine residue.

The protein resides in the plastid. It is found in the chloroplast. The catalysed reaction is [ADP-thiazole synthase]-L-cysteine + glycine + NAD(+) = [ADP-thiazole synthase]-dehydroalanine + ADP-5-ethyl-4-methylthiazole-2-carboxylate + nicotinamide + 3 H2O + 2 H(+). Its function is as follows. Involved in biosynthesis of the thiamine precursor thiazole. Catalyzes the conversion of NAD and glycine to adenosine diphosphate 5-(2-hydroxyethyl)-4-methylthiazole-2-carboxylic acid (ADT), an adenylated thiazole intermediate. The reaction includes an iron-dependent sulfide transfer from a conserved cysteine residue of the protein to a thiazole intermediate. The enzyme can only undergo a single turnover, which suggests it is a suicide enzyme. May have additional roles in adaptation to various stress conditions and in DNA damage tolerance. This Citrus sinensis (Sweet orange) protein is Thiamine thiazole synthase, chloroplastic.